Consider the following 142-residue polypeptide: Large ribosomal subunit protein uL11 (142 aa).

The tract at residues 84 to 103 (AGVKSGSGRPNSDKVGTVTD) is disordered.

It belongs to the universal ribosomal protein uL11 family. As to quaternary structure, part of the ribosomal stalk of the 50S ribosomal subunit. Interacts with L10 and the large rRNA to form the base of the stalk. L10 forms an elongated spine to which L12 dimers bind in a sequential fashion forming a multimeric L10(L12)X complex. Post-translationally, one or more lysine residues are methylated.

In terms of biological role, forms part of the ribosomal stalk which helps the ribosome interact with GTP-bound translation factors. The sequence is that of Large ribosomal subunit protein uL11 from Aliivibrio salmonicida (strain LFI1238) (Vibrio salmonicida (strain LFI1238)).